The following is a 145-amino-acid chain: Hemoglobin subunit beta-2 (145 aa).

The Globin domain maps to 2 to 145 (HLTDQEIKYI…VADAVGKGYH (144 aa)). Residues His63 and His91 each contribute to the heme b site.

It belongs to the globin family. In terms of tissue distribution, red blood cells.

The polypeptide is Hemoglobin subunit beta-2 (Telmatobius peruvianus (Andean frog)).